The sequence spans 146 residues: UPF0742 protein SPAC977.02 (146 aa).

The chain crosses the membrane as a helical span at residues 38–60 (LTVKYCLAVKLLIYLLYCWYIYS).

It belongs to the UPF0742 family.

The protein resides in the cytoplasm. It is found in the nucleus membrane. This is UPF0742 protein SPAC977.02 from Schizosaccharomyces pombe (strain 972 / ATCC 24843) (Fission yeast).